Reading from the N-terminus, the 94-residue chain is Integration host factor subunit beta (94 aa).

The protein belongs to the bacterial histone-like protein family. In terms of assembly, heterodimer of an alpha and a beta chain.

Functionally, this protein is one of the two subunits of integration host factor, a specific DNA-binding protein that functions in genetic recombination as well as in transcriptional and translational control. This chain is Integration host factor subunit beta, found in Nitrosospira multiformis (strain ATCC 25196 / NCIMB 11849 / C 71).